Here is a 115-residue protein sequence, read N- to C-terminus: Large ribosomal subunit protein bL19 (115 aa).

Belongs to the bacterial ribosomal protein bL19 family.

This protein is located at the 30S-50S ribosomal subunit interface and may play a role in the structure and function of the aminoacyl-tRNA binding site. This is Large ribosomal subunit protein bL19 from Syntrophotalea carbinolica (strain DSM 2380 / NBRC 103641 / GraBd1) (Pelobacter carbinolicus).